The following is a 268-amino-acid chain: MLIDIIRAVILGIVEGVTEFLPVSSTGHLLLAERFFNLGEGNFWKSFAVLIQLGAILAILALYFVKLWRIALGMFTDANARRFVIGVLVAFLPAAVIGAAFGGYIKHYLFNPWVVCFSLIVGGAILLWVDQLDLKPRYHDATAFPLLTYFYIGCAQCTAMIPGVSRSGASIVAAMLLGTDKRSAAEFSFFLAIPTMLGAFVYDLYKNHADMTADNLIIVAIGFVVSFITAIIVVKTFLTYVTRHGFELFAWWRVIVGTLGLIALALGL.

7 consecutive transmembrane segments (helical) span residues 47-67 (FAVL…FVKL), 83-103 (FVIG…AFGG), 109-129 (LFNP…LLWV), 144-164 (FPLL…IPGV), 184-204 (AAEF…VYDL), 217-237 (IIVA…VKTF), and 248-268 (LFAW…ALGL).

Belongs to the UppP family.

It is found in the cell inner membrane. It catalyses the reaction di-trans,octa-cis-undecaprenyl diphosphate + H2O = di-trans,octa-cis-undecaprenyl phosphate + phosphate + H(+). In terms of biological role, catalyzes the dephosphorylation of undecaprenyl diphosphate (UPP). Confers resistance to bacitracin. The sequence is that of Undecaprenyl-diphosphatase from Rhodopseudomonas palustris (strain ATCC BAA-98 / CGA009).